We begin with the raw amino-acid sequence, 311 residues long: Tricarboxylate transport protein, mitochondrial (311 aa).

Positions 1 to 13 (MAAPRAPRALTAA) are cleaved as a propeptide — removed in mature form. 3 Solcar repeats span residues 23-111 (THPG…LSNH), 122-208 (RRGL…LRNW), and 218-303 (MNPL…VVKL). A run of 3 helical transmembrane segments spans residues 29-46 (ILAGGLAGGIEICITFPT), 86-105 (GLSSLLYGSIPKAAVRFGMF), and 129-143 (LGAGVAEAVVVVCPM). Ser-156 carries the post-translational modification Phosphoserine. Transmembrane regions (helical) follow at residues 183–202 (GLTATVLKQGSNQAIRFFVM), 224–241 (GVFGAVAGAASVFGNTPL), and 278–297 (GTVPRLGRVCLDVAIVFVIY).

This sequence belongs to the mitochondrial carrier (TC 2.A.29) family. In terms of processing, possesses a short cleavable presequence, which, however, is found to be dispensable both for targeting to mitochondria and insertion into the inner membrane. However, the presequence is required to keep SLC25A1 in a soluble state and thus in an import-competent state. Mature SLC25A1 lacking the presequence is prone to aggregation.

The protein resides in the mitochondrion inner membrane. The enzyme catalyses (S)-malate(in) + citrate(out) = (S)-malate(out) + citrate(in). It catalyses the reaction citrate(out) + succinate(in) = citrate(in) + succinate(out). The catalysed reaction is D-threo-isocitrate(in) + citrate(out) = D-threo-isocitrate(out) + citrate(in). It carries out the reaction cis-aconitate(in) + citrate(out) = cis-aconitate(out) + citrate(in). The enzyme catalyses trans-aconitate(in) + citrate(out) = trans-aconitate(out) + citrate(in). It catalyses the reaction phosphoenolpyruvate(in) + citrate(out) = phosphoenolpyruvate(out) + citrate(in). The catalysed reaction is maleate(in) + citrate(out) = maleate(out) + citrate(in). Functionally, mitochondrial electroneutral antiporter that exports citrate from the mitochondria into the cytosol in exchange for malate. Also able to mediate the exchange of citrate for isocitrate, phosphoenolpyruvate, cis-aconitate and to a lesser extent trans-aconitate, maleate and succinate. In the cytoplasm, citrate plays important roles in fatty acid and sterol synthesis, regulation of glycolysis, protein acetylation, and other physiopathological processes. The polypeptide is Tricarboxylate transport protein, mitochondrial (Slc25a1) (Rattus norvegicus (Rat)).